Consider the following 206-residue polypeptide: Glycerol-3-phosphate acyltransferase 1 (206 aa).

5 helical membrane-spanning segments follow: residues L7–L27, I54–I74, D81–F101, I114–I134, and W155–F175.

The protein belongs to the PlsY family. Probably interacts with PlsX.

The protein resides in the cell membrane. The enzyme catalyses an acyl phosphate + sn-glycerol 3-phosphate = a 1-acyl-sn-glycero-3-phosphate + phosphate. It functions in the pathway lipid metabolism; phospholipid metabolism. In terms of biological role, catalyzes the transfer of an acyl group from acyl-phosphate (acyl-PO(4)) to glycerol-3-phosphate (G3P) to form lysophosphatidic acid (LPA). This enzyme utilizes acyl-phosphate as fatty acyl donor, but not acyl-CoA or acyl-ACP. This is Glycerol-3-phosphate acyltransferase 1 from Lactobacillus johnsonii (strain CNCM I-12250 / La1 / NCC 533).